The following is a 112-amino-acid chain: Integration host factor subunit alpha (112 aa).

The protein belongs to the bacterial histone-like protein family. As to quaternary structure, heterodimer of an alpha and a beta chain.

This protein is one of the two subunits of integration host factor, a specific DNA-binding protein that functions in genetic recombination as well as in transcriptional and translational control. This is Integration host factor subunit alpha from Rhizobium etli (strain ATCC 51251 / DSM 11541 / JCM 21823 / NBRC 15573 / CFN 42).